Here is a 172-residue protein sequence, read N- to C-terminus: Large ribosomal subunit protein uL10 (172 aa).

This sequence belongs to the universal ribosomal protein uL10 family. Part of the ribosomal stalk of the 50S ribosomal subunit. The N-terminus interacts with L11 and the large rRNA to form the base of the stalk. The C-terminus forms an elongated spine to which L12 dimers bind in a sequential fashion forming a multimeric L10(L12)X complex.

In terms of biological role, forms part of the ribosomal stalk, playing a central role in the interaction of the ribosome with GTP-bound translation factors. In Francisella tularensis subsp. holarctica (strain FTNF002-00 / FTA), this protein is Large ribosomal subunit protein uL10.